Consider the following 472-residue polypeptide: Coronin-6 (472 aa).

WD repeat units follow at residues 23–64 (QAYE…VLPL), 72–111 (KNYP…VWQI), 122–161 (EPII…IWNV), 165–204 (EVLL…IIDP), 210–251 (VAEQ…LWDP), and 256–296 (EPVA…YFEI). Residues 407–433 (KRNILDVRPPSGPRRSQSASDAPLSQQ) form a disordered region. Residues 420-433 (RRSQSASDAPLSQQ) show a composition bias toward polar residues. Positions 430 to 464 (LSQQHTLETLLEEIKALRERVQAQEQRITALENML) form a coiled coil.

In Homo sapiens (Human), this protein is Coronin-6 (CORO6).